A 451-amino-acid polypeptide reads, in one-letter code: Trigger factor (451 aa).

In terms of domain architecture, PPIase FKBP-type spans 165-250 (DDKLTIDFEG…LRQIQAREAL (86 aa)).

The protein belongs to the FKBP-type PPIase family. Tig subfamily.

It is found in the cytoplasm. It carries out the reaction [protein]-peptidylproline (omega=180) = [protein]-peptidylproline (omega=0). Functionally, involved in protein export. Acts as a chaperone by maintaining the newly synthesized protein in an open conformation. Functions as a peptidyl-prolyl cis-trans isomerase. This Helicobacter pylori (strain Shi470) protein is Trigger factor.